The chain runs to 352 residues: UDP-N-acetylglucosamine--N-acetylmuramyl-(pentapeptide) pyrophosphoryl-undecaprenol N-acetylglucosamine transferase (352 aa).

Residues Ser-195 and Gln-287 each contribute to the UDP-N-acetyl-alpha-D-glucosamine site.

Belongs to the glycosyltransferase 28 family. MurG subfamily.

The protein localises to the cell membrane. It carries out the reaction Mur2Ac(oyl-L-Ala-gamma-D-Glu-L-Lys-D-Ala-D-Ala)-di-trans,octa-cis-undecaprenyl diphosphate + UDP-N-acetyl-alpha-D-glucosamine = beta-D-GlcNAc-(1-&gt;4)-Mur2Ac(oyl-L-Ala-gamma-D-Glu-L-Lys-D-Ala-D-Ala)-di-trans,octa-cis-undecaprenyl diphosphate + UDP + H(+). The protein operates within cell wall biogenesis; peptidoglycan biosynthesis. Functionally, cell wall formation. Catalyzes the transfer of a GlcNAc subunit on undecaprenyl-pyrophosphoryl-MurNAc-pentapeptide (lipid intermediate I) to form undecaprenyl-pyrophosphoryl-MurNAc-(pentapeptide)GlcNAc (lipid intermediate II). The sequence is that of UDP-N-acetylglucosamine--N-acetylmuramyl-(pentapeptide) pyrophosphoryl-undecaprenol N-acetylglucosamine transferase from Streptococcus pneumoniae (strain Hungary19A-6).